Consider the following 214-residue polypeptide: Variable small protein 1 (214 aa).

The first 18 residues, 1 to 18 (MRKRISAIIMTLFMVFMS), serve as a signal peptide directing secretion. Cysteine 19 carries the N-palmitoyl cysteine lipid modification. A lipid anchor (S-diacylglycerol cysteine) is attached at cysteine 19.

The protein belongs to the variable small protein (Vsp) family.

The protein localises to the cell outer membrane. Functionally, the Vlp and Vsp proteins are antigenically distinct proteins, only one vlp or vsp gene is transcriptionally active at any one time. Switching between these genes is a mechanism of host immune response evasion. The chain is Variable small protein 1 from Borrelia hermsii.